We begin with the raw amino-acid sequence, 106 residues long: UPF0060 membrane protein Rleg2_1018 (106 aa).

4 helical membrane-spanning segments follow: residues 4-24, 30-50, 58-78, and 86-106; these read IIYA…WAWL, VWWL…LTLV, TFAA…WLVE, and DIGG…GPRG.

Belongs to the UPF0060 family.

It is found in the cell inner membrane. The chain is UPF0060 membrane protein Rleg2_1018 from Rhizobium leguminosarum bv. trifolii (strain WSM2304).